We begin with the raw amino-acid sequence, 515 residues long: 1-pyrroline-5-carboxylate dehydrogenase (515 aa).

Catalysis depends on residues E286 and C320.

This sequence belongs to the aldehyde dehydrogenase family. RocA subfamily.

The catalysed reaction is L-glutamate 5-semialdehyde + NAD(+) + H2O = L-glutamate + NADH + 2 H(+). It functions in the pathway amino-acid degradation; L-proline degradation into L-glutamate; L-glutamate from L-proline: step 2/2. The protein is 1-pyrroline-5-carboxylate dehydrogenase of Geobacillus kaustophilus (strain HTA426).